Here is a 178-residue protein sequence, read N- to C-terminus: FXYD domain-containing ion transport regulator 5 (178 aa).

Positions 1 to 21 (MSLSSRLCLLTIVALILPSRG) are cleaved as a signal peptide. Residues 21-59 (GQTPKKPTSIFTADQTSATTRDNVPDPDQTSPGVQTTPL) are compositionally biased toward polar residues. Residues 21-130 (GQTPKKPTSI…SYIEHPLDSN (110 aa)) are disordered. At 22–145 (QTPKKPTSIF…YYDDTTLRKR (124 aa)) the chain is on the extracellular side. A compositionally biased stretch (low complexity) spans 67–79 (TGSQTAAQTETQQ). Positions 80–100 (LTKMATSNPVSDPGPHTSSKK) are enriched in polar residues. Residues 146-166 (GLLVAAVLFITGIIILTSGKC) traverse the membrane as a helical segment. The Cytoplasmic portion of the chain corresponds to 167-178 (RQLSQFCLNRHR).

Belongs to the FXYD family. Regulatory subunit of the sodium/potassium-transporting ATPase which is composed of a catalytic alpha subunit, a non-catalytic beta subunit and an additional regulatory subunit. The regulatory subunit, a member of the FXYD protein family, modulates the enzymatic activity in a tissue- and isoform-specific way by changing affinities of the Na+/K+-ATPase toward Na(+), K(+) or ATP. In terms of processing, glycosylated. In terms of tissue distribution, expressed mainly in epithelial tissue, such as lung, intestine and kidney. Not detected in brain, liver, muscle, and heart.

Its subcellular location is the cell membrane. It localises to the basolateral cell membrane. Functionally, associates with and regulates the activity of the sodium/potassium-transporting ATPase (NKA) which catalyzes the hydrolysis of ATP coupled with the exchange of Na(+) and K(+) ions across the plasma membrane. May increase NKA activity by increasing the apparent affinity for Na(+). Involved in down-regulation of E-cadherin which results in reduced cell adhesion. Promotes metastasis. The sequence is that of FXYD domain-containing ion transport regulator 5 (Fxyd5) from Mus musculus (Mouse).